A 98-amino-acid polypeptide reads, in one-letter code: NADH-ubiquinone oxidoreductase chain 4L (98 aa).

Transmembrane regions (helical) follow at residues 1-21 (MSMV…GLLM), 29-49 (SLLC…VTIL), and 61-81 (IILL…LVMV).

This sequence belongs to the complex I subunit 4L family. Core subunit of respiratory chain NADH dehydrogenase (Complex I) which is composed of 45 different subunits.

The protein localises to the mitochondrion inner membrane. The catalysed reaction is a ubiquinone + NADH + 5 H(+)(in) = a ubiquinol + NAD(+) + 4 H(+)(out). Its function is as follows. Core subunit of the mitochondrial membrane respiratory chain NADH dehydrogenase (Complex I) which catalyzes electron transfer from NADH through the respiratory chain, using ubiquinone as an electron acceptor. Part of the enzyme membrane arm which is embedded in the lipid bilayer and involved in proton translocation. This is NADH-ubiquinone oxidoreductase chain 4L (MT-ND4L) from Halichoerus grypus (Gray seal).